A 95-amino-acid polypeptide reads, in one-letter code: TBK1 inhibitor DP96R (95 aa).

It belongs to the asfivirus DP96R family.

In terms of biological role, inhibits cGAS-STING-mediated type I IFN expression and NF-kB activation by inhibiting TBK1 and IKBKB/IKKB. Inhibits host TBK1 phosphorylation. The protein is TBK1 inhibitor DP96R of Ornithodoros (relapsing fever ticks).